Here is a 94-residue protein sequence, read N- to C-terminus: Alpha-elapitoxin-Nss2a (94 aa).

Residues 1-21 form the signal peptide; it reads MKTLLLTLVVVTIVCLDLGDS. 5 disulfides stabilise this stretch: Cys-24–Cys-41, Cys-34–Cys-62, Cys-47–Cys-51, Cys-66–Cys-77, and Cys-78–Cys-83.

Belongs to the three-finger toxin family. Long-chain subfamily. Type II alpha-neurotoxin sub-subfamily. Expressed by the venom gland.

The protein resides in the secreted. Binds with high affinity to muscular (alpha-1/CHRNA1) and neuronal (alpha-7/CHRNA7) nicotinic acetylcholine receptor (nAChR) and inhibits acetylcholine from binding to the receptor, thereby impairing neuromuscular and neuronal transmission. In Notechis scutatus scutatus (Mainland tiger snake), this protein is Alpha-elapitoxin-Nss2a.